Consider the following 461-residue polypeptide: tRNA modification GTPase MnmE (461 aa).

(6S)-5-formyl-5,6,7,8-tetrahydrofolate contacts are provided by R23, E88, and R127. A TrmE-type G domain is found at 223 to 383 (GLNTVIVGKP…LKECIKNLFF (161 aa)). N233 is a binding site for K(+). GTP-binding positions include 233-238 (NVGKSS), 252-258 (TEIPGTT), and 277-280 (DTAG). S237 contributes to the Mg(2+) binding site. K(+) contacts are provided by T252, I254, and T257. T258 is a binding site for Mg(2+). K461 provides a ligand contact to (6S)-5-formyl-5,6,7,8-tetrahydrofolate.

This sequence belongs to the TRAFAC class TrmE-Era-EngA-EngB-Septin-like GTPase superfamily. TrmE GTPase family. In terms of assembly, homodimer. Heterotetramer of two MnmE and two MnmG subunits. It depends on K(+) as a cofactor.

Its subcellular location is the cytoplasm. Functionally, exhibits a very high intrinsic GTPase hydrolysis rate. Involved in the addition of a carboxymethylaminomethyl (cmnm) group at the wobble position (U34) of certain tRNAs, forming tRNA-cmnm(5)s(2)U34. The protein is tRNA modification GTPase MnmE of Clostridium botulinum (strain Loch Maree / Type A3).